Here is a 546-residue protein sequence, read N- to C-terminus: Glucose-6-phosphate isomerase (546 aa).

The active-site Proton donor is the E352. Catalysis depends on residues H383 and K511.

This sequence belongs to the GPI family.

It localises to the cytoplasm. It carries out the reaction alpha-D-glucose 6-phosphate = beta-D-fructose 6-phosphate. It participates in carbohydrate biosynthesis; gluconeogenesis. The protein operates within carbohydrate degradation; glycolysis; D-glyceraldehyde 3-phosphate and glycerone phosphate from D-glucose: step 2/4. Its function is as follows. Catalyzes the reversible isomerization of glucose-6-phosphate to fructose-6-phosphate. The polypeptide is Glucose-6-phosphate isomerase (Paramagnetospirillum magneticum (strain ATCC 700264 / AMB-1) (Magnetospirillum magneticum)).